The sequence spans 430 residues: NAD(P)(+) glycohydrolase toxin Tse6 (430 aa).

Transmembrane regions (helical) follow at residues F17 to V37, L46 to V66, and L193 to L213.

In terms of assembly, interacts with Tsi6, VgrG1a, EagT6 and EF-Tu.

The protein resides in the membrane. The catalysed reaction is NAD(+) + H2O = ADP-D-ribose + nicotinamide + H(+). In terms of biological role, type VI secretion exported toxin that acts as a glycohydrolase on bacterial target cells and degrades the essential dinucleotides NAD(+) and NADP(+), thereby inducing bacteriostasis. The activity resides in the C-terminal region that is initially neutralized by the cognate immunity protein Tsi6. This Pseudomonas aeruginosa (strain ATCC 15692 / DSM 22644 / CIP 104116 / JCM 14847 / LMG 12228 / 1C / PRS 101 / PAO1) protein is NAD(P)(+) glycohydrolase toxin Tse6.